We begin with the raw amino-acid sequence, 332 residues long: Acryloyl-coenzyme A reductase (332 aa).

Cys-38 is a Zn(2+) binding site. An NADP(+)-binding site is contributed by Tyr-39. Zn(2+) is bound by residues His-60, Asp-90, Cys-93, Cys-96, Cys-104, and Cys-146. Residues 172-175 (SGGV) and 194-196 (TTS) contribute to the NADP(+) site.

This sequence belongs to the zinc-containing alcohol dehydrogenase family. As to quaternary structure, monomer. It depends on Zn(2+) as a cofactor.

It catalyses the reaction propanoyl-CoA + NADP(+) = acryloyl-CoA + NADPH + H(+). Functionally, plays a role in autotrophic carbon fixation via the 3-hydroxypropionate/4-hydroxybutyrate cycle. Catalyzes the acryloyl-CoA dependent NADPH oxidation and formation of propionyl-CoA. The protein is Acryloyl-coenzyme A reductase of Metallosphaera sedula (strain ATCC 51363 / DSM 5348 / JCM 9185 / NBRC 15509 / TH2).